The following is a 248-amino-acid chain: MLYLHDVWVNWFEGEENGYNVCHFYEWRKDDTIELLDQVPLLKVDATLYHYIENELLELPQKMLEDVHHKAYIRKNHERLQQEYCFVVTDGKGIIAIDTIGYNVPIRKSRLIPRQEQMVYEMVENVQAEKYEFQVEEIEKEHHILSPSPFIMNGLTRKERQLKQLLFMALDQLHTTKNTAEIRYWFTEWDPSAYGMVQHMEFEDIWAKLYEEAKTGWSEKHEQLCERLVKGQPFFEKLWEMENEQKVN.

This sequence belongs to the UPF0736 family.

The polypeptide is UPF0736 protein BCE_1296 (Bacillus cereus (strain ATCC 10987 / NRS 248)).